We begin with the raw amino-acid sequence, 253 residues long: Ubiquinone/menaquinone biosynthesis C-methyltransferase UbiE (253 aa).

Residues Thr-76, Asp-97, 125–126, and Ser-142 each bind S-adenosyl-L-methionine; that span reads NA.

It belongs to the class I-like SAM-binding methyltransferase superfamily. MenG/UbiE family.

It catalyses the reaction a 2-demethylmenaquinol + S-adenosyl-L-methionine = a menaquinol + S-adenosyl-L-homocysteine + H(+). The catalysed reaction is a 2-methoxy-6-(all-trans-polyprenyl)benzene-1,4-diol + S-adenosyl-L-methionine = a 5-methoxy-2-methyl-3-(all-trans-polyprenyl)benzene-1,4-diol + S-adenosyl-L-homocysteine + H(+). Its pathway is quinol/quinone metabolism; menaquinone biosynthesis; menaquinol from 1,4-dihydroxy-2-naphthoate: step 2/2. The protein operates within cofactor biosynthesis; ubiquinone biosynthesis. Methyltransferase required for the conversion of demethylmenaquinol (DMKH2) to menaquinol (MKH2) and the conversion of 2-polyprenyl-6-methoxy-1,4-benzoquinol (DDMQH2) to 2-polyprenyl-3-methyl-6-methoxy-1,4-benzoquinol (DMQH2). This chain is Ubiquinone/menaquinone biosynthesis C-methyltransferase UbiE, found in Xylella fastidiosa (strain 9a5c).